The chain runs to 446 residues: UDP-N-acetylmuramoylalanine--D-glutamate ligase (446 aa).

115-121 (GSNGKST) lines the ATP pocket.

It belongs to the MurCDEF family.

The protein localises to the cytoplasm. The catalysed reaction is UDP-N-acetyl-alpha-D-muramoyl-L-alanine + D-glutamate + ATP = UDP-N-acetyl-alpha-D-muramoyl-L-alanyl-D-glutamate + ADP + phosphate + H(+). It functions in the pathway cell wall biogenesis; peptidoglycan biosynthesis. Its function is as follows. Cell wall formation. Catalyzes the addition of glutamate to the nucleotide precursor UDP-N-acetylmuramoyl-L-alanine (UMA). This Hahella chejuensis (strain KCTC 2396) protein is UDP-N-acetylmuramoylalanine--D-glutamate ligase.